The following is a 274-amino-acid chain: Diaminopimelate epimerase (274 aa).

Positions 11, 44, and 64 each coordinate substrate. Cysteine 73 (proton donor) is an active-site residue. Residues 74 to 75, asparagine 157, asparagine 190, and 208 to 209 each bind substrate; these read GN and ER. Cysteine 217 acts as the Proton acceptor in catalysis. 218 to 219 provides a ligand contact to substrate; that stretch reads GS.

Belongs to the diaminopimelate epimerase family. In terms of assembly, homodimer.

The protein localises to the cytoplasm. It catalyses the reaction (2S,6S)-2,6-diaminopimelate = meso-2,6-diaminopimelate. It functions in the pathway amino-acid biosynthesis; L-lysine biosynthesis via DAP pathway; DL-2,6-diaminopimelate from LL-2,6-diaminopimelate: step 1/1. Its function is as follows. Catalyzes the stereoinversion of LL-2,6-diaminopimelate (L,L-DAP) to meso-diaminopimelate (meso-DAP), a precursor of L-lysine and an essential component of the bacterial peptidoglycan. The protein is Diaminopimelate epimerase of Pasteurella multocida (strain Pm70).